We begin with the raw amino-acid sequence, 474 residues long: Immunoglobulin heavy constant mu (474 aa).

Positions 1–105 (GSASAPTLFP…NKEKNVPLPV (105 aa)) are CH1. At 1–450 (GSASAPTLFP…EEGFENLWAT (450 aa)) the chain is on the extracellular side. Ig-like domains follow at residues 6–102 (PTLF…KNVP), 111–211 (PKVS…QNAS), 229–319 (PSFA…QTIS), and 329–430 (PDVY…RTVD). Cystine bridges form between Cys-28–Cys-88 and Cys-134–Cys-197. The N-linked (GlcNAc...) (complex) asparagine glycan is linked to Asn-46. Residues 106–217 (IAELPPKVSV…QNASSMCVPD (112 aa)) are CH2. Residue Asn-209 is glycosylated (N-linked (GlcNAc...) (complex) asparagine). The interval 218–323 (QDTAIRVFAI…LKQTISRPKG (106 aa)) is CH3. Cystine bridges form between Cys-244-Cys-303 and Cys-351-Cys-413. Asn-272 and Asn-279 each carry an N-linked (GlcNAc...) asparagine glycan. Positions 324–452 (VALHRPDVYL…GFENLWATAS (129 aa)) are CH4. An important for IgM oligomerization region spans residues 437-453 (VSADEEGFENLWATAST). N-linked (GlcNAc...) asparagine glycosylation is present at Asp-440. The chain crosses the membrane as a helical span at residues 451–471 (ASTFIVLFLLSLFYSTTVTLF). Topologically, residues 472 to 474 (KVK) are cytoplasmic.

In terms of assembly, the basic structural unit of both sIgM and mIgM molecules consists of two identical heavy chains and two identical light chains; disulfide-linked. N-terminal variable regions of the heavy and light chains form the antigen binding sites, whereas the C-terminal constant regions of the heavy chains interact with immune receptors to mediate effector functions. As to quaternary structure, part of IgM antibody. Forms high order oligomers, homopentamers stabilized by the JCHAIN and homohexamers that lack JCHAIN. The oligomerization amplifies an inherently low affinity of IgM antibodies for the antigen by multi-point attachment (avidity). Adjacent IgM protomers associate via interchain disulfide links to form an asymmetric pentameric structure with a 50 degree gap. A single copy of JCHAIN is covalently linked to the first and the fifth IgM monomers via interchain disulfide bonds thus closing the pentamer ring. Only JCHAIN-containing IgM binds PIGR secretory component (via D1-CDR1 region); this interaction is a prerequisite for IgM transcytosis across mucosal epithelium. Pentameric sIgM interacts (via CH4 domain) with FCRM (via Ig-like domain); the interaction is glycan-independent and multivalent theoretically involving up to eight binding sites for the IgM pentamer. Interacts with FCAMR; this interaction facilitates the endocytosis of IgM-coated microbes or IgM-antigen immune complexes. Antigen-bound IgM (via the Fc region) binds to globular domains of C1q component of the complement system, all three modules C1QA, C1QB and C1QC being involved in IgM binding; this interaction is multivalent. Pentameric sIgM (via Fc region) interacts with CD5L (via SRCR2) through interchain disulfide-linkages; this interaction protects CD5L from renal excretion and provides for high levels of CD5L in circulation. Part of IgM B cell receptor complex on pre-B cells, immature and mature B cells. The BCR complex consists of one membrane-bound IgM molecule responsible for antigen binding, non-covalently associated with CD79A and CD79B signaling chains. In terms of processing, N-glycosylated; important for IgM secretion and its localization at the plasma membrane. The interaction with FCMR is glycan-independent.

The protein resides in the secreted. It is found in the cell membrane. Constant region of immunoglobulin heavy chains. Immunoglobulins, also known as antibodies, are membrane-bound or secreted glycoproteins produced by B lymphocytes. In the recognition phase of humoral immunity, the membrane-bound immunoglobulins serve as receptors which, upon binding of a specific antigen, trigger the clonal expansion and differentiation of B lymphocytes into immunoglobulins-secreting plasma cells. Secreted immunoglobulins mediate the effector phase of humoral immunity, which results in the elimination of bound antigens. The antigen binding site is formed by the variable domain of one heavy chain, together with that of its associated light chain. Thus, each immunoglobulin has two antigen binding sites with remarkable affinity for a particular antigen. The variable domains are assembled by a process called V-(D)-J rearrangement and can then be subjected to somatic hypermutations which, after exposure to antigen and selection, allow affinity maturation for a particular antigen. Its function is as follows. Constant region of secreted IgM (sIgM), also known as the Fc region of IgM antibody. Able to multimerize, forms high order polymers, mainly pentamers and occasionally hexamers, providing for multivalency and high avidity recognition of antigens. Natural sIgM are polyreactive and recognize conserved self- and pathogen-derived structures, whereas immune sIgM are secreted only upon exposure to pathogens and are antigen-specific. Both natural and immune sIgM are required for an efficient humoral immune response to infection. Mediates sIgM effector functions mostly via Fc receptors and the complement system. On lymphoid cells binds high-affinity Fc receptor FCMR and promotes induction of an efficient neutralizing IgG response while maintaining tolerance to self-antigens. Recruits C1q complement component to initiate the classical complement pathway, facilitating the recognition and neutralization of pathogens by the host. Together with C1q and mannose-binding lectin promotes the phagocytosis of apoptotic cells by macrophages, ensuring the clearance of potential autoimmune epitopes from tissues. Involved in mucosal immunity. It is transported by transcytosis across mucosal epithelium by PIGR and secreted on the apical side in complex with PIGR secretory component to scan mucosal lining for pathogens. IgM-antigen complexes undergo FCMR-mediated retrotranscytosis across mucosal M cells toward antigen-presenting cells in mucosal lymphoid tissues. In terms of biological role, constant region of membrane-bound IgM, part of the B cell receptor complex (BCR). IgM BCR provides constitutive tonic signaling for B cell survival. Mediates pre-BCR signaling that regulates B cell selection and rearrangement of Ig genes via allelic exclusion. This chain is Immunoglobulin heavy constant mu, found in Homo sapiens (Human).